Here is a 327-residue protein sequence, read N- to C-terminus: Ribose-phosphate pyrophosphokinase (327 aa).

Residues 46-48 (NGE) and 105-106 (RQ) each bind ATP. The Mg(2+) site is built by H139 and D179. The active site involves K203. D-ribose 5-phosphate contacts are provided by residues R205, D231, and 235 to 239 (DTGGT).

Belongs to the ribose-phosphate pyrophosphokinase family. Class I subfamily. In terms of assembly, homohexamer. The cofactor is Mg(2+).

The protein resides in the cytoplasm. The catalysed reaction is D-ribose 5-phosphate + ATP = 5-phospho-alpha-D-ribose 1-diphosphate + AMP + H(+). Its pathway is metabolic intermediate biosynthesis; 5-phospho-alpha-D-ribose 1-diphosphate biosynthesis; 5-phospho-alpha-D-ribose 1-diphosphate from D-ribose 5-phosphate (route I): step 1/1. Its function is as follows. Involved in the biosynthesis of the central metabolite phospho-alpha-D-ribosyl-1-pyrophosphate (PRPP) via the transfer of pyrophosphoryl group from ATP to 1-hydroxyl of ribose-5-phosphate (Rib-5-P). The sequence is that of Ribose-phosphate pyrophosphokinase from Mycobacterium leprae (strain TN).